The chain runs to 126 residues: Histone H2B 1/2/3/4/6 (126 aa).

Over residues 1–12 the composition is skewed to low complexity; the sequence is MPEPAKSAPAPK. The segment at 1–36 is disordered; the sequence is MPEPAKSAPAPKKGSKKAVTKTQKKGDKKRKKSRKE. 2 positions are modified to N6-acetyllysine: lysine 6 and lysine 13. A compositionally biased stretch (basic residues) spans 13–34; that stretch reads KGSKKAVTKTQKKGDKKRKKSR. Position 15 is a phosphoserine (serine 15). N6-acetyllysine occurs at positions 16 and 21. Residue lysine 121 forms a Glycyl lysine isopeptide (Lys-Gly) (interchain with G-Cter in ubiquitin) linkage.

This sequence belongs to the histone H2B family. In terms of assembly, the nucleosome is a histone octamer containing two molecules each of H2A, H2B, H3 and H4 assembled in one H3-H4 heterotetramer and two H2A-H2B heterodimers. The octamer wraps approximately 147 bp of DNA. Post-translationally, monoubiquitination of Lys-121 by the BRE1 gives a specific tag for epigenetic transcriptional activation and is also prerequisite for histone H3 'Lys-4' and 'Lys-79' methylation. In terms of processing, phosphorylated on Ser-15 during apoptosis; which facilitates apoptotic chromatin condensation.

Its subcellular location is the nucleus. It is found in the chromosome. Its function is as follows. Core component of nucleosome. Nucleosomes wrap and compact DNA into chromatin, limiting DNA accessibility to the cellular machineries which require DNA as a template. Histones thereby play a central role in transcription regulation, DNA repair, DNA replication and chromosomal stability. DNA accessibility is regulated via a complex set of post-translational modifications of histones, also called histone code, and nucleosome remodeling. Functionally, has broad-spectrum antibacterial activity. May be important in the antimicrobial defenses of chick reproductive system during follicle development in the ovary and egg formation in the oviduct. The chain is Histone H2B 1/2/3/4/6 (H2B-I) from Gallus gallus (Chicken).